A 418-amino-acid polypeptide reads, in one-letter code: UDP-N-acetylglucosamine 1-carboxyvinyltransferase (418 aa).

Position 22-23 (22-23 (KN)) interacts with phosphoenolpyruvate. UDP-N-acetyl-alpha-D-glucosamine is bound at residue arginine 93. Cysteine 117 (proton donor) is an active-site residue. Cysteine 117 carries the 2-(S-cysteinyl)pyruvic acid O-phosphothioketal modification. UDP-N-acetyl-alpha-D-glucosamine-binding residues include aspartate 306 and isoleucine 328.

The protein belongs to the EPSP synthase family. MurA subfamily.

The protein resides in the cytoplasm. The catalysed reaction is phosphoenolpyruvate + UDP-N-acetyl-alpha-D-glucosamine = UDP-N-acetyl-3-O-(1-carboxyvinyl)-alpha-D-glucosamine + phosphate. It participates in cell wall biogenesis; peptidoglycan biosynthesis. In terms of biological role, cell wall formation. Adds enolpyruvyl to UDP-N-acetylglucosamine. The sequence is that of UDP-N-acetylglucosamine 1-carboxyvinyltransferase from Hydrogenovibrio crunogenus (strain DSM 25203 / XCL-2) (Thiomicrospira crunogena).